The following is a 254-amino-acid chain: RNA polymerase sigma-D factor (254 aa).

Positions 54-67 match the Polymerase core binding motif; it reads DLMSLGMLGLYDAL. Residues 220–239 constitute a DNA-binding region (H-T-H motif); it reads LTEIGQVLNLSTSRISQIHS.

As to quaternary structure, monomer. Interacts transiently with the RNAP core.

Sigma factors are initiation factors that promote the attachment of RNA polymerase (RNAP) to specific initiation sites and are then released. This alternative sigma factor is required for the transcription of the flagellin and motility genes as well as for wild-type chemotaxis. Associates with the RNAP core during all growth phases with a peak at the transition to stationary phase. The protein is RNA polymerase sigma-D factor (sigD) of Bacillus subtilis (strain 168).